A 144-amino-acid polypeptide reads, in one-letter code: Large ribosomal subunit protein uL22 (144 aa).

The span at arginine 124–glutamine 137 shows a compositional bias: basic residues. A disordered region spans residues arginine 124–lysine 144.

Belongs to the universal ribosomal protein uL22 family. As to quaternary structure, part of the 50S ribosomal subunit.

Functionally, this protein binds specifically to 23S rRNA; its binding is stimulated by other ribosomal proteins, e.g. L4, L17, and L20. It is important during the early stages of 50S assembly. It makes multiple contacts with different domains of the 23S rRNA in the assembled 50S subunit and ribosome. The globular domain of the protein is located near the polypeptide exit tunnel on the outside of the subunit, while an extended beta-hairpin is found that lines the wall of the exit tunnel in the center of the 70S ribosome. The polypeptide is Large ribosomal subunit protein uL22 (Mycoplasmoides gallisepticum (strain R(low / passage 15 / clone 2)) (Mycoplasma gallisepticum)).